The following is a 217-amino-acid chain: Cytidylate kinase (217 aa).

9–17 contributes to the ATP binding site; sequence GPAGSGKTT.

It belongs to the cytidylate kinase family. Type 1 subfamily.

It localises to the cytoplasm. The catalysed reaction is CMP + ATP = CDP + ADP. It catalyses the reaction dCMP + ATP = dCDP + ADP. The polypeptide is Cytidylate kinase (Thermosipho melanesiensis (strain DSM 12029 / CIP 104789 / BI429)).